The chain runs to 461 residues: Phosphoglycerate kinase, chloroplastic (461 aa).

Residues 1–60 (MALSMKMRANARVSGRRVAAVAPRVVPFSSASSSVLRSGFALRCLWTSAAWAALASVVEA) constitute a chloroplast transit peptide. A82, D83, N85, R100, S122, H123, G125, R126, R182, H214, and R215 together coordinate (2R)-3-phosphoglycerate. G260 is a binding site for ADP. G260 contacts CDP. 2 residues coordinate AMP: K262 and K266. K266 is a binding site for ATP. An ADP-binding site is contributed by G284. G284 is a binding site for CDP. G285 and G357 together coordinate AMP. 2 residues coordinate ATP: G285 and G357. 2 residues coordinate CDP: G382 and F387. Residue F387 coordinates ADP. E388 contacts AMP. 3 residues coordinate ATP: E388, D419, and S420. D419 contacts Mg(2+).

Belongs to the phosphoglycerate kinase family. Monomer. It depends on Mg(2+) as a cofactor.

The protein localises to the plastid. It is found in the chloroplast. The enzyme catalyses (2R)-3-phosphoglycerate + ATP = (2R)-3-phospho-glyceroyl phosphate + ADP. It functions in the pathway carbohydrate biosynthesis; Calvin cycle. The polypeptide is Phosphoglycerate kinase, chloroplastic (Chlamydomonas reinhardtii (Chlamydomonas smithii)).